A 2055-amino-acid chain; its full sequence is Dedicator of cytokinesis protein 9 (2055 aa).

A phosphoserine mark is found at Ser178 and Ser181. The region spanning 185–292 (GITKHGWLYK…WVTVLNKILQ (108 aa)) is the PH domain. A disordered region spans residues 301–326 (EKRNGDPHEDDEQSKLEGSGSGLDSY). Phosphoserine is present on residues Ser444 and Ser453. One can recognise a C2 DOCK-type domain in the interval 649–827 (SNHLYVYPKY…PLLKISTHLV (179 aa)). Residues Ser936 and Ser1244 each carry the phosphoserine modification. Thr1250 is modified (phosphothreonine). The segment at 1253-1291 (INSVRNADSRGSLISTDSGNSLPDRNPEKSNSLDKQQQS) is disordered. A phosphoserine mark is found at Ser1264, Ser1270, and Ser1273. Polar residues predominate over residues 1264–1276 (SLISTDSGNSLPD). The region spanning 1614–2055 (KSYASTPELR…LSDIMREQMG (442 aa)) is the DOCKER domain. The interval 1679–2055 (DEEASMMEDV…LSDIMREQMG (377 aa)) is interaction with CDC42.

Belongs to the DOCK family. Homodimer. Interacts preferentially with nucleotide-depleted CDC42. As to expression, expressed in lung. Also detected in Peyers patches, thymus, brain and lymph nodes. Expressed in Purkinje cells.

It is found in the endomembrane system. In terms of biological role, guanine nucleotide-exchange factor (GEF) that activates CDC42 by exchanging bound GDP for free GTP. Overexpression induces filopodia formation. This chain is Dedicator of cytokinesis protein 9, found in Mus musculus (Mouse).